We begin with the raw amino-acid sequence, 211 residues long: uncharacterized protein (211 aa).

4 helical membrane-spanning segments follow: residues 77–97 (FLMF…AITI), 113–133 (GISV…VLIG), 152–172 (ILIS…NVIP), and 179–199 (LLTP…PLFG).

It localises to the cell membrane. This is an uncharacterized protein from Bacillus subtilis (strain 168).